Consider the following 360-residue polypeptide: MTIILKDLSNSSILWEGFEDEFGNYSGTPPTEDYDYSPCEISTETLNKYAVVVIDALVFLLSLLGNSLVMLVILYSRIGRSVTDVYLLNLAMADLLFAMTLPIWTASKAKGWVFGTPLCKVVSLLKEVNFYSGILLLACISMDRYLAIVHATRTLTQKWHWVKFICLGIWALSVILALPIFIFREAYQPPYSDLVCYEDLGANTTKWRMIMRVLPQTFGFLLPLLVMLFCYGFTLRTLFSAQMGHKHRAMRVIFAVVLVFLLCWLPYNLVLIADTLMRAHVIAETCQRRNDIGRALDATEILGFLHSCLNPLIYVFIGQKFRHGLLKIMAIHGLISKEFLAKDGRPSFVGSSSGNTSTTL.

Residues 1–48 lie on the Extracellular side of the membrane; the sequence is MTIILKDLSNSSILWEGFEDEFGNYSGTPPTEDYDYSPCEISTETLNK. 2 N-linked (GlcNAc...) asparagine glycosylation sites follow: asparagine 10 and asparagine 24. The helical transmembrane segment at 49–75 threads the bilayer; sequence YAVVVIDALVFLLSLLGNSLVMLVILY. Topologically, residues 76–84 are cytoplasmic; it reads SRIGRSVTD. A helical transmembrane segment spans residues 85-105; that stretch reads VYLLNLAMADLLFAMTLPIWT. The Extracellular portion of the chain corresponds to 106–120; that stretch reads ASKAKGWVFGTPLCK. A disulfide bridge connects residues cysteine 119 and cysteine 196. The chain crosses the membrane as a helical span at residues 121–142; sequence VVSLLKEVNFYSGILLLACISM. Residues 143–163 lie on the Cytoplasmic side of the membrane; sequence DRYLAIVHATRTLTQKWHWVK. A helical transmembrane segment spans residues 164 to 183; it reads FICLGIWALSVILALPIFIF. At 184–208 the chain is on the extracellular side; the sequence is REAYQPPYSDLVCYEDLGANTTKWR. Residues 209-231 traverse the membrane as a helical segment; the sequence is MIMRVLPQTFGFLLPLLVMLFCY. Residues 232 to 251 are Cytoplasmic-facing; sequence GFTLRTLFSAQMGHKHRAMR. Residues 252–273 traverse the membrane as a helical segment; it reads VIFAVVLVFLLCWLPYNLVLIA. The Extracellular segment spans residues 274-294; the sequence is DTLMRAHVIAETCQRRNDIGR. Residues 295–315 traverse the membrane as a helical segment; the sequence is ALDATEILGFLHSCLNPLIYV. Over 316–360 the chain is Cytoplasmic; that stretch reads FIGQKFRHGLLKIMAIHGLISKEFLAKDGRPSFVGSSSGNTSTTL.

It belongs to the G-protein coupled receptor 1 family. Interacts with IL8. Interacts with GNAI2. Post-translationally, phosphorylated upon ligand binding; which is required for desensitization.

It localises to the cell membrane. In terms of biological role, receptor for interleukin-8 which is a powerful neutrophil chemotactic factor. Binding of IL-8 to the receptor causes activation of neutrophils. This response is mediated via a G-protein that activates a phosphatidylinositol-calcium second messenger system. Binds to IL-8 with high affinity. Also binds with high affinity to CXCL3, GRO/MGSA and NAP-2. This is C-X-C chemokine receptor type 2 (CXCR2) from Bos taurus (Bovine).